Reading from the N-terminus, the 380-residue chain is Crotonobetainyl-CoA reductase (380 aa).

Belongs to the acyl-CoA dehydrogenase family. As to quaternary structure, homotetramer. Requires FAD as cofactor.

Its subcellular location is the cytoplasm. The enzyme catalyses 4-(trimethylamino)butanoyl-CoA + oxidized [electron-transfer flavoprotein] + H(+) = crotonobetainyl-CoA + reduced [electron-transfer flavoprotein]. It functions in the pathway amine and polyamine metabolism; carnitine metabolism. Its function is as follows. Catalyzes the reduction of crotonobetainyl-CoA to gamma-butyrobetainyl-CoA. In Citrobacter koseri (strain ATCC BAA-895 / CDC 4225-83 / SGSC4696), this protein is Crotonobetainyl-CoA reductase.